A 209-amino-acid chain; its full sequence is uncharacterized protein (209 aa).

Residues 1 to 67 (MEILPKYKPE…LIMYNYWTID (67 aa)) enclose the MPN domain. Zn(2+) contacts are provided by His-17, His-19, and Asp-30. The JAMM motif motif lies at 17–30 (HTHPKGPAEPSIND).

This is an uncharacterized protein from Acidianus convivator (ATV).